We begin with the raw amino-acid sequence, 205 residues long: MAEEPEPDLGVAEGSEDQALEMPSWKAPEDIDPQPGSYEIRHYGPAKWVSTCVESLDWDSAIQTGFTKLNGYIQGKNEKEMKIKLTAPVTSYVEPGSSPFSESTITISLYIPSEQQPDPPRPSESDVFIEDRAEMTVFVRSFDGFSSGQKNQEQLLTLANILREEGKVFNEKVFYTAGYSSPFQLLDRNNEVWLIQKNEPSVENK.

A disordered region spans residues 1-37 (MAEEPEPDLGVAEGSEDQALEMPSWKAPEDIDPQPGS). An N-acetylalanine modification is found at A2. The residue at position 181 (S181) is a Phosphoserine.

It belongs to the HEBP family. As to quaternary structure, monomer. Interacts with LRPPRC. May interact with BCL2L1; an interaction with BCL2L1 was observed using a peptide, but not with the full-length protein. The full-length protein would have to undergo a major conformation change for the interaction to occur. Interacts with PDCD6.

It is found in the cytoplasm. Its subcellular location is the mitochondrion. Its function is as follows. Can promote mitochondrial permeability transition and facilitate necrotic cell death under different types of stress conditions. May have low affinity for heme. The protein is Heme-binding protein 2 (Hebp2) of Mus musculus (Mouse).